The chain runs to 104 residues: Large ribosomal subunit protein uL24 (104 aa).

It belongs to the universal ribosomal protein uL24 family. As to quaternary structure, part of the 50S ribosomal subunit.

In terms of biological role, one of two assembly initiator proteins, it binds directly to the 5'-end of the 23S rRNA, where it nucleates assembly of the 50S subunit. One of the proteins that surrounds the polypeptide exit tunnel on the outside of the subunit. The polypeptide is Large ribosomal subunit protein uL24 (Buchnera aphidicola subsp. Acyrthosiphon pisum (strain 5A)).